Reading from the N-terminus, the 430-residue chain is Adenylosuccinate synthetase (430 aa).

GTP contacts are provided by residues 12–18 (GDEGKGK) and 40–42 (GHT). Asp13 functions as the Proton acceptor in the catalytic mechanism. 2 residues coordinate Mg(2+): Asp13 and Gly40. IMP contacts are provided by residues 13-16 (DEGK), 38-41 (NAGH), Thr130, Arg144, Gln224, Thr239, and Arg303. Residue His41 is the Proton donor of the active site. 299-305 (VNTGRKR) contributes to the substrate binding site. Residues Arg305, 331 to 333 (KLD), and 413 to 415 (STS) contribute to the GTP site.

Belongs to the adenylosuccinate synthetase family. As to quaternary structure, homodimer. The cofactor is Mg(2+).

Its subcellular location is the cytoplasm. It catalyses the reaction IMP + L-aspartate + GTP = N(6)-(1,2-dicarboxyethyl)-AMP + GDP + phosphate + 2 H(+). It functions in the pathway purine metabolism; AMP biosynthesis via de novo pathway; AMP from IMP: step 1/2. Functionally, plays an important role in the de novo pathway of purine nucleotide biosynthesis. Catalyzes the first committed step in the biosynthesis of AMP from IMP. In Rhodopseudomonas palustris (strain TIE-1), this protein is Adenylosuccinate synthetase.